The sequence spans 216 residues: Uracil phosphoribosyltransferase (216 aa).

Residues R85, R110, and 135–143 (DPMVATGYS) each bind 5-phospho-alpha-D-ribose 1-diphosphate. Uracil contacts are provided by residues I200 and 205–207 (GDA). D206 serves as a coordination point for 5-phospho-alpha-D-ribose 1-diphosphate.

It belongs to the UPRTase family. The cofactor is Mg(2+).

The catalysed reaction is UMP + diphosphate = 5-phospho-alpha-D-ribose 1-diphosphate + uracil. Its pathway is pyrimidine metabolism; UMP biosynthesis via salvage pathway; UMP from uracil: step 1/1. With respect to regulation, allosterically activated by GTP. In terms of biological role, catalyzes the conversion of uracil and 5-phospho-alpha-D-ribose 1-diphosphate (PRPP) to UMP and diphosphate. The protein is Uracil phosphoribosyltransferase of Burkholderia pseudomallei (strain 668).